Reading from the N-terminus, the 322-residue chain is Lipoyl synthase (322 aa).

Residues cysteine 68, cysteine 73, cysteine 79, cysteine 94, cysteine 98, cysteine 101, and serine 309 each coordinate [4Fe-4S] cluster. The 219-residue stretch at 80 to 298 folds into the Radical SAM core domain; sequence FNHGTASFMI…RVAGVEMGFS (219 aa).

Belongs to the radical SAM superfamily. Lipoyl synthase family. Requires [4Fe-4S] cluster as cofactor.

It localises to the cytoplasm. The catalysed reaction is [[Fe-S] cluster scaffold protein carrying a second [4Fe-4S](2+) cluster] + N(6)-octanoyl-L-lysyl-[protein] + 2 oxidized [2Fe-2S]-[ferredoxin] + 2 S-adenosyl-L-methionine + 4 H(+) = [[Fe-S] cluster scaffold protein] + N(6)-[(R)-dihydrolipoyl]-L-lysyl-[protein] + 4 Fe(3+) + 2 hydrogen sulfide + 2 5'-deoxyadenosine + 2 L-methionine + 2 reduced [2Fe-2S]-[ferredoxin]. It functions in the pathway protein modification; protein lipoylation via endogenous pathway; protein N(6)-(lipoyl)lysine from octanoyl-[acyl-carrier-protein]: step 2/2. In terms of biological role, catalyzes the radical-mediated insertion of two sulfur atoms into the C-6 and C-8 positions of the octanoyl moiety bound to the lipoyl domains of lipoate-dependent enzymes, thereby converting the octanoylated domains into lipoylated derivatives. This chain is Lipoyl synthase, found in Idiomarina loihiensis (strain ATCC BAA-735 / DSM 15497 / L2-TR).